Consider the following 218-residue polypeptide: Copper acquisition factor BIM1 (218 aa).

Positions 1–19 (MFALKFILITSFIASTALA) are cleaved as a signal peptide. Cu(2+) contacts are provided by His-20 and His-65. 2 disulfide bridges follow: Cys-40–Cys-144 and Cys-110–Cys-161. N-linked (GlcNAc...) asparagine glycosylation is found at Asn-87, Asn-91, and Asn-124. Position 138 (Asp-138) interacts with Cu(2+). Asn-158 and Asn-170 each carry an N-linked (GlcNAc...) asparagine glycan. The segment at 160-194 (TCTDDASRTSNASSTSSGSATATSAAATSSSSGTS) is disordered. Low complexity predominate over residues 167–194 (RTSNASSTSSGSATATSAAATSSSSGTS). Residue Ser-190 is the site of GPI-anchor amidated serine attachment. A propeptide spans 191–218 (SGTSGAIKEVVGLGALSLALGIAGLIIL) (removed in mature form).

This sequence belongs to the X325 family. The cofactor is Cu(2+).

The protein localises to the cell membrane. Its function is as follows. Lytic polysaccharide monooxygenase-like protein that has diverged to biological functions other than polysaccharide degradation since it does not perform oxidative cleavage of polysaccharides. Cell surface-bound protein that functions in the copper-accumulation pathway shared by the CUF1-dependent copper transporter CTR1. Involved in maintaining cell wall integrity during copper deficiency. Binds Cu(2+) with an estimated 1:1 stoichiometry and might serve as an extracellular copper ligand. FRE4 and FRE7 metalloreductases probably function together with CTR1 and BIM1 to liberate the Cu(2+) bound to the BIM1 copper-binding site for subsequent import of Cu(+) into the cell by CTR1, via the reduction of BIM1-bound Cu(2+) to Cu(+) to reduce binding affinity for BIM1 but increase affinity for CTR1. Facilitates copper acquisition in the brain of mammalian hosts and acts as a copper-dependent virulence trait in fungal meningitis. While BIM1 plays a critical role in cryptococcal meningitis, at least in part through its role in copper acquisition, it could play additional roles during copper limitation or as a means to invade and colonize host tissues in the brain, by compromising host carbohydrate integrity via its lytic polysaccharide monooxygenase (LPMO) activity, which has still to be determined. This chain is Copper acquisition factor BIM1, found in Cryptococcus neoformans var. neoformans serotype D (strain JEC21 / ATCC MYA-565) (Filobasidiella neoformans).